The chain runs to 200 residues: MHCPFCQNPDTKVIDTRISDDGHSIRRRRECPNCGARFSTLETTMLLVKKRSGNVEQFDRNKVIAGVRKACQGRPIHEDDLKRLGQQVEEDLRARGVAQVPSDEVGKAILRPLKDLDEVAYLRFASVYQNFEDLEDFQHAIDALRDSDKMLVSACPAGQAETSISCGYQLSMTRVRIVPVMASSASMVTSSGHLVTSVTT.

A zinc finger lies at 3–34 (CPFCQNPDTKVIDTRISDDGHSIRRRRECPNC). Residues 46-136 (LLVKKRSGNV…VYQNFEDLED (91 aa)) form the ATP-cone domain.

This sequence belongs to the NrdR family. Requires Zn(2+) as cofactor.

Its function is as follows. Negatively regulates transcription of bacterial ribonucleotide reductase nrd genes and operons by binding to NrdR-boxes. The polypeptide is Transcriptional repressor NrdR (Bifidobacterium animalis subsp. lactis (strain AD011)).